Consider the following 591-residue polypeptide: V-type ATP synthase alpha chain (591 aa).

233-240 (GPFGAGKT) contributes to the ATP binding site.

The protein belongs to the ATPase alpha/beta chains family.

It catalyses the reaction ATP + H2O + 4 H(+)(in) = ADP + phosphate + 5 H(+)(out). Its function is as follows. Produces ATP from ADP in the presence of a proton gradient across the membrane. The V-type alpha chain is a catalytic subunit. The polypeptide is V-type ATP synthase alpha chain (Streptococcus pneumoniae (strain Hungary19A-6)).